We begin with the raw amino-acid sequence, 793 residues long: MKGFKDWVFALSNSMASSRPLLGSDPFFRDPHQEQDNHSQAPAAPQPVTLSEPPCSTSSDLEILPPLSQQQVPLESLYQSSIDLNGKKHNPLAKIGGLQVQFLRLVQRFGQSQNNILVSKVLYRVHLAMLIRAEESELKNVKLRQDRAKALAREQESSGIPELDFSLRILVLGKTGVGKSATINSIFGQPKSETDAFRPGTDRIEEVMGTVSGVKVTFIDTPGFHPLSSSSTRKNRKILLSIKRYVKKRPPDVVLYLDRLDMIDMRYSDFSLLQLITEIFGAAIWLNTILVMTHSAATTEGRNGQSVNYESYVGQRMDVVQHYIHQAVSDTKLENPVLLVENHPSCKKNLAGEYVLPNGVVWKPQFMFLCVCTKVLGDVQSLLRFRDSIGLGQPSSTRTASLPHLLSVFLRRRLSSGADETEKEIDKLLNLDLEEEDEYDQLPTIRILGKSRFEKLSKSQKKEYLDELDYRETLYLKKQLKEECRRRRDEKLVEEENLEDTEQRDQAAVPLPDMAGPDSFDSDFPAHRYRCVSAGDQWLVRPVYDPQGWDRDVGFDGINIETAAKINRNLFASATGQVSRDKQRFTIQSETNAAYTRNFREQTFSVAVDLQSSGEDLVYSFQGGTKLQTFKHNTTDVGVGLTSFGGKYYVGGKLEDTLLVGKRVKLTANAGQMRGSGQTANGGSFEACIRGRDYPVRNEQIGLTMTALSFKRELVLNYGLQTQFRPARGTNIDVNINMNNRKMGKINVKLNSSEHWEIALISALTMFKALVRRSKTEMTEENEEEKIVNFLVS.

The disordered stretch occupies residues 22–59 (LGSDPFFRDPHQEQDNHSQAPAAPQPVTLSEPPCSTSS). The segment covering 27–37 (FFRDPHQEQDN) has biased composition (basic and acidic residues). Residues 130 to 157 (LIRAEESELKNVKLRQDRAKALAREQES) adopt a coiled-coil conformation. An AIG1-type G domain is found at 164-394 (DFSLRILVLG…FRDSIGLGQP (231 aa)). Positions 173-180 (GKTGVGKS) are G1. GTP is bound by residues 176–181 (GVGKSA) and 195–200 (DAFRPG). S180 lines the Mg(2+) pocket. The tract at residues 195–198 (DAFR) is homodimerization. The interval 199-203 (PGTDR) is G2. Residues 220–223 (DTPG) are G3. A homodimerization region spans residues 259–264 (RLDMID). The chain crosses the membrane as a helical span at residues 279-297 (IFGAAIWLNTILVMTHSAA). Residues 293–296 (THSA) are G4. Residues H294 and 341-342 (EN) contribute to the GTP site. A G5 region spans residues 341–343 (ENH). Coiled-coil stretches lie at residues 410–442 (LRRR…YDQL) and 477–503 (KKQL…DTEQ).

This sequence belongs to the TRAFAC class TrmE-Era-EngA-EngB-Septin-like GTPase superfamily. AIG1/Toc34/Toc159-like paraseptin GTPase family. TOC159 subfamily. Homodimer. Part of the TOC core complex that includes 1 protein for the specific recognition of transit peptides surrounded by a ring composed of four proteins forming translocation channels, and four to five GTP-binding proteins providing energy. This core complex can interact with components of the TIC complex to form a larger import complex. Chloroplastic protein precursor such as prSS (precursor of the RuBisCO small subunit) interacts with these complexes. The TOC complex contains a specific subset of polar lipids such as digalactosyldiacylglyceride (DGDG), phosphatidylcholine (PC) and phosphatidylglycerol (PG). Interacts with TOC33 and TOC75. The cofactor is Mg(2+). In terms of tissue distribution, expressed in seedlings, leaves, flowers, and roots.

It is found in the plastid. It localises to the chloroplast outer membrane. The protein resides in the cytoplasm. In terms of biological role, GTPase involved in protein precursor import into chloroplasts. Seems to recognize chloroplast-destined precursor proteins and regulate their presentation to the translocation channel through GTP hydrolysis. Probably specialized in the import of nuclear encoded photosynthetic preproteins from the cytoplasm to the chloroplast. This Arabidopsis thaliana (Mouse-ear cress) protein is Translocase of chloroplast 90, chloroplastic (TOC90).